The primary structure comprises 701 residues: Ubiquitin thioesterase zranb1-B (701 aa).

3 RanBP2-type zinc fingers span residues 3 to 33 (EDGI…PRPS), 79 to 108 (TSSK…QRRT), and 143 to 173 (IKGQ…PTPN). The Zn(2+) site is built by C10, C13, C24, C27, C85, C88, C99, and C102. The segment covering 108–121 (TRSPTESPQSSGSG) has biased composition (polar residues). The segment at 108–129 (TRSPTESPQSSGSGLRSIPGPI) is disordered. Zn(2+) contacts are provided by C150, C153, C164, and C167. The disordered stretch occupies residues 197–220 (RWRGGCSSSNSQRRSPPTSKRDSD). The segment covering 202–214 (CSSSNSQRRSPPT) has biased composition (polar residues). ANK repeat units lie at residues 253 to 283 (RKTD…SGGD) and 306 to 333 (YTLV…QHAA). One can recognise an OTU domain in the interval 425–585 (LYALWNRTAG…RGHFSALVAM (161 aa)). The active-site Nucleophile is C436. The active-site Proton acceptor is H578.

This sequence belongs to the peptidase C64 family.

The protein localises to the cytoplasm. It localises to the nucleus. It catalyses the reaction Thiol-dependent hydrolysis of ester, thioester, amide, peptide and isopeptide bonds formed by the C-terminal Gly of ubiquitin (a 76-residue protein attached to proteins as an intracellular targeting signal).. Its function is as follows. Ubiquitin thioesterase, which specifically hydrolyzes 'Lys-29'-linked and 'Lys-33'-linked diubiquitin. Also cleaves 'Lys-63'-linked chains, but with 40-fold less efficiency compared to 'Lys-29'-linked ones. Positive regulator of the Wnt signaling pathway that deubiquitinates apc protein, a negative regulator of Wnt-mediated transcription. Acts as a regulator of autophagy by mediating deubiquitination of pik3c3/vps34, thereby promoting autophagosome maturation. Plays a role in the regulation of cell morphology and cytoskeletal organization. Required in the stress fiber dynamics and cell migration. This Xenopus laevis (African clawed frog) protein is Ubiquitin thioesterase zranb1-B (zranb1-b).